The primary structure comprises 312 residues: DDRGK domain-containing protein 1 (312 aa).

The Lumenal portion of the chain corresponds to 1–2 (ME). The helical transmembrane segment at 3-23 (LIILVGIATALLVVIITLYLL) threads the bilayer. The Cytoplasmic portion of the chain corresponds to 24–312 (QKKNAAPETK…ISAGGEEASS (289 aa)). The segment covering 59–79 (NQRNRLRQNAPAAPAGQVAPA) has biased composition (low complexity). The tract at residues 59–162 (NQRNRLRQNA…RKHQEDLEAE (104 aa)) is disordered. Over residues 110-162 (LDEKMGAKKRAKMEAKEQKRLQREQELHDREQRKVKEAKEEAERKHQEDLEAE) the composition is skewed to basic and acidic residues.

This sequence belongs to the DDRGK1 family. Interacts with Atg9; the interaction is transient.

The protein localises to the endoplasmic reticulum membrane. In terms of biological role, substrate adapter for ufmylation, the covalent attachment of the ubiquitin-like modifier UFM1 to substrate proteins. Required for ufmylation of Atg9; protects the nervous system during aging, possibly by stabilizing Atg9 and supporting its function. The polypeptide is DDRGK domain-containing protein 1 (Drosophila yakuba (Fruit fly)).